Consider the following 374-residue polypeptide: Nudix hydrolase 20, chloroplastic (374 aa).

Residues 1 to 49 (MASGFCSLALTVTTSLFSSHAITRRVLPILRWRSSSMSLSPLRHSRALS) constitute a chloroplast transit peptide. In terms of domain architecture, Nudix hydrolase spans 205 to 346 (GYGVHMNGYV…KANCSLVIID (142 aa)). The Nudix box signature appears at 244–265 (GGLPHGISCGGNLVKECEEEAG). 2 residues coordinate Mg(2+): glutamate 259 and glutamate 263.

Belongs to the Nudix hydrolase family. The cofactor is Mg(2+). Mn(2+) serves as cofactor. Expressed in leaves and inflorescences.

It is found in the plastid. Its subcellular location is the chloroplast. In terms of biological role, probably mediates the hydrolysis of some nucleoside diphosphate derivatives. The protein is Nudix hydrolase 20, chloroplastic (NUDT20) of Arabidopsis thaliana (Mouse-ear cress).